We begin with the raw amino-acid sequence, 221 residues long: Probable GTP-binding protein EngB (221 aa).

Positions 37–219 constitute an EngB-type G domain; that stretch reads QGIEIALAGR…RAAIVKLLRE (183 aa). Residues 45–52, 72–76, 97–100, 164–167, and 198–200 contribute to the GTP site; these read GRSNVGKS, GRTQE, DMPG, TKTD, and TSS. 2 residues coordinate Mg(2+): Ser52 and Thr74.

This sequence belongs to the TRAFAC class TrmE-Era-EngA-EngB-Septin-like GTPase superfamily. EngB GTPase family. The cofactor is Mg(2+).

Necessary for normal cell division and for the maintenance of normal septation. This Afipia carboxidovorans (strain ATCC 49405 / DSM 1227 / KCTC 32145 / OM5) (Oligotropha carboxidovorans) protein is Probable GTP-binding protein EngB.